We begin with the raw amino-acid sequence, 123 residues long: Protein crumbs homolog 3 (123 aa).

Residues 1 to 26 (MASPGLGLLLALGLPLLPARWGRAWG) form the signal peptide. Topologically, residues 27 to 59 (QTLDPHVNENGTITPSAPGSGSNGALSQEAITA) are extracellular. The N-linked (GlcNAc...) asparagine glycan is linked to Asn36. The chain crosses the membrane as a helical span at residues 60–80 (IIVVFSLLAAVLLAVGLVLLL). Residues 81–120 (RKLREKRQTQGTYRPSSEEQFNHAAEARAPQDSKETVRGC) lie on the Cytoplasmic side of the membrane. The disordered stretch occupies residues 87 to 123 (RQTQGTYRPSSEEQFNHAAEARAPQDSKETVRGCLPI). Residues 96-117 (SSEEQFNHAAEARAPQDSKETV) show a composition bias toward basic and acidic residues. The PDZ-binding signature appears at 119–123 (GCLPI).

In terms of assembly, component of a complex composed of CRB3, PALS1 and PATJ. Interacts (via C-terminus) with PALS1 (via PDZ domain). Interacts with PARD6A. Interacts (via intracellular domain) with EPB41L5. Interacts with WDR83.

The protein resides in the apical cell membrane. The protein localises to the cell junction. It is found in the tight junction. Involved in the establishment of cell polarity in mammalian epithelial cells. Regulates the morphogenesis of tight junctions. Involved in promoting phosphorylation and cytoplasmic retention of transcriptional coactivators YAP1 and WWTR1/TAZ which leads to suppression of TGFB1-dependent transcription of target genes such as CCN2/CTGF, SERPINE1/PAI1, SNAI1/SNAIL1 and SMAD7. This is Protein crumbs homolog 3 from Canis lupus familiaris (Dog).